The chain runs to 920 residues: Probable transport protein MmpL7 (920 aa).

A run of 12 helical transmembrane segments spans residues L44–T64, I210–L230, A241–V261, V271–L291, L311–A331, L344–A364, S389–M409, L761–M781, A790–W810, V822–I842, G864–S884, and F888–V908.

The protein belongs to the resistance-nodulation-cell division (RND) (TC 2.A.6) family. MmpL subfamily.

It is found in the cell membrane. This is Probable transport protein MmpL7 (mmpL7) from Mycobacterium bovis (strain ATCC BAA-935 / AF2122/97).